A 409-amino-acid chain; its full sequence is Translation initiation factor 2 subunit gamma (409 aa).

In terms of domain architecture, tr-type G spans 7–203 (QPEVNIGLVG…TIESEIPTPD (197 aa)). The tract at residues 16–23 (GHVDHGKT) is G1. Residues aspartate 19, threonine 23, glycine 44, and serine 46 each contribute to the Mg(2+) site. A GTP-binding site is contributed by 19–24 (DHGKTT). A G2 region spans residues 44–48 (GISIR). The G3 stretch occupies residues 90–93 (DAPG). GTP is bound by residues 146-149 (NKID) and 181-183 (SAQ). The tract at residues 146–149 (NKID) is G4. Residues 181-183 (SAQ) are G5.

This sequence belongs to the TRAFAC class translation factor GTPase superfamily. Classic translation factor GTPase family. EIF2G subfamily. In terms of assembly, heterotrimer composed of an alpha, a beta and a gamma chain. Mg(2+) is required as a cofactor.

It carries out the reaction GTP + H2O = GDP + phosphate + H(+). Functionally, eIF-2 functions in the early steps of protein synthesis by forming a ternary complex with GTP and initiator tRNA. The polypeptide is Translation initiation factor 2 subunit gamma (Natronomonas pharaonis (strain ATCC 35678 / DSM 2160 / CIP 103997 / JCM 8858 / NBRC 14720 / NCIMB 2260 / Gabara) (Halobacterium pharaonis)).